The primary structure comprises 364 residues: Chorismate synthase (364 aa).

NADP(+) contacts are provided by R48 and R54. Residues 125–127 (RSS), 238–239 (NA), G278, 293–297 (KPTSS), and R319 contribute to the FMN site.

Belongs to the chorismate synthase family. As to quaternary structure, homotetramer. FMNH2 serves as cofactor.

It catalyses the reaction 5-O-(1-carboxyvinyl)-3-phosphoshikimate = chorismate + phosphate. The protein operates within metabolic intermediate biosynthesis; chorismate biosynthesis; chorismate from D-erythrose 4-phosphate and phosphoenolpyruvate: step 7/7. Functionally, catalyzes the anti-1,4-elimination of the C-3 phosphate and the C-6 proR hydrogen from 5-enolpyruvylshikimate-3-phosphate (EPSP) to yield chorismate, which is the branch point compound that serves as the starting substrate for the three terminal pathways of aromatic amino acid biosynthesis. This reaction introduces a second double bond into the aromatic ring system. The protein is Chorismate synthase of Marinobacter nauticus (strain ATCC 700491 / DSM 11845 / VT8) (Marinobacter aquaeolei).